Here is a 328-residue protein sequence, read N- to C-terminus: V-type sodium ATPase subunit C (328 aa).

This sequence belongs to the V-ATPase V0D/AC39 subunit family.

Involved in ATP-driven sodium extrusion. The chain is V-type sodium ATPase subunit C (ntpC) from Enterococcus hirae (strain ATCC 9790 / DSM 20160 / JCM 8729 / LMG 6399 / NBRC 3181 / NCIMB 6459 / NCDO 1258 / NCTC 12367 / WDCM 00089 / R).